A 30-amino-acid polypeptide reads, in one-letter code: Cyclotide cycloviolacin O17 (30 aa).

A cross-link (cyclopeptide (Gly-Asn)) is located at residues glycine 1–asparagine 30. 3 disulfide bridges follow: cysteine 4/cysteine 20, cysteine 8/cysteine 22, and cysteine 13/cysteine 27.

This is a cyclic peptide.

In terms of biological role, probably participates in a plant defense mechanism. This Psychotria brachyceras protein is Cyclotide cycloviolacin O17.